The sequence spans 193 residues: Ion-translocating oxidoreductase complex subunit A (193 aa).

6 consecutive transmembrane segments (helical) span residues 5–25 (ALLFVSILLVNNFVLVKFLGL), 39–59 (IGMGMATTFVMTLGSMFSWLI), 62–82 (FILVPLDILYLRTMAFILVLA), 102–122 (LLGIFLPLITTNCAVLGVVLL), 134–154 (TIYGFGGAAGFSLVMVLFAAI), and 171–191 (SIALITAGLMSLAFMGFTGLV).

Belongs to the NqrDE/RnfAE family. As to quaternary structure, the complex is composed of six subunits: RnfA, RnfB, RnfC, RnfD, RnfE and RnfG.

The protein localises to the cell inner membrane. Its function is as follows. Part of a membrane-bound complex that couples electron transfer with translocation of ions across the membrane. In Pectobacterium atrosepticum (strain SCRI 1043 / ATCC BAA-672) (Erwinia carotovora subsp. atroseptica), this protein is Ion-translocating oxidoreductase complex subunit A.